Consider the following 288-residue polypeptide: Phenazine biosynthesis-like domain-containing protein (288 aa).

Glu46 is an active-site residue.

It belongs to the PhzF family. As to quaternary structure, interacts with UNRIP/MAWD.

The sequence is that of Phenazine biosynthesis-like domain-containing protein (PBLD) from Homo sapiens (Human).